We begin with the raw amino-acid sequence, 132 residues long: Small ribosomal subunit protein uS8c (132 aa).

Belongs to the universal ribosomal protein uS8 family. As to quaternary structure, part of the 30S ribosomal subunit.

It is found in the plastid. Its subcellular location is the chloroplast. In terms of biological role, one of the primary rRNA binding proteins, it binds directly to 16S rRNA central domain where it helps coordinate assembly of the platform of the 30S subunit. The protein is Small ribosomal subunit protein uS8c (rps8) of Acorus calamus (Sweet flag).